The chain runs to 1604 residues: Putative surface cell antigen sca2 (1604 aa).

Positions 1–33 are cleaved as a signal peptide; the sequence is MSLQNSHSKKYVLTFFMSTCLLTSSFLSTSARA. 3 disordered regions span residues 324 to 354, 554 to 603, and 1183 to 1240; these read TTKPFTKHSRTTTNTAGISSGVPFDTGRTKP, NVNN…SNPN, and QQEN…KSLL. The span at 554-564 shows a compositional bias: low complexity; it reads NVNNNSNKGQN. Over residues 568-587 the composition is skewed to pro residues; sequence ILPPTPPLNGSMPPSPPPPL. Basic and acidic residues-rich tracts occupy residues 1193–1213 and 1227–1240; these read SSTKDDPQPEDSNKKSEKSDS and SKNDKSSDDKKSLL. Residues 1325–1604 enclose the Autotransporter domain; it reads EASINRGVWI…QGLIKLKVNL (280 aa).

The protein localises to the cell outer membrane. The polypeptide is Putative surface cell antigen sca2 (sca2) (Rickettsia felis (strain ATCC VR-1525 / URRWXCal2) (Rickettsia azadi)).